The following is a 393-amino-acid chain: Putative F-box protein At1g55070 (393 aa).

The F-box domain occupies 29 to 74 (GEYFDRIPADLVIKILSKLSAKSMAKCRCVCKLLSSIIRQPNYNQL).

The sequence is that of Putative F-box protein At1g55070 from Arabidopsis thaliana (Mouse-ear cress).